Reading from the N-terminus, the 144-residue chain is Ribosomally synthesized cyclic peptide phomopsin precursor phomA' (144 aa).

The signal sequence occupies residues Met1–Ala18. 9 propeptides span residues Ala19–Asp35, Lys42–Asp50, Lys57–Asp65, Lys72–Asp79, Lys86–Asp94, Lys101–Asp108, Lys115–Asp123, Lys130–Asp137, and Lys144.

Post-translationally, phomA' is processed by several endopeptidases including kexin proteases as well as the cluster-specific S41 family peptidase phomP1' and the peptidase phomG' to produce 5 identical copies of the hexapeptide Tyr-Val-Ile-Pro-Ile-Asp and 3 identical copies of Tyr-Val-Ile-Pro-Phe-Asp, that are further modified into phomapsins A and P, respectively. The timing and order of proteolysis of the phomA' precursor and PTMs are still unknown. Two tyrosinase-like enzyme phomQ1' and PhomQ2, catalyze the chlorination and hydroxylation of Tyr, respectively. PhomYb', is proposed to be involved in the construction of the macrocyclic structure. The other four ustYa family proteins may be involved in PTMs that generate the unique structure of phomopsin A. PhomYa' is required for the hydroxylation of C-beta of Tyr. PhomYc', PhomYd', and PhomYe' are responsible for the biosynthesis of 2,3-dehydroisoleucine (dIle), 2,3-dehydroaspartic acid (dAsp), and 3,4-dehydroproline (dPro), respectively. While dIle formation by phomYc is indispensable for the installation of dAsp by phomYd, the order of the other PTMs have not been elucidated yet. Most of the biosynthetic enzymes likely have broad substrate specificity, and thus, there might be a metabolic grid from a precursor to phomopsin A. The enzyme(s) responsible for the biosynthesis of 3,4-dehydrovaline (dVal) have also not been identified yet. Finally, PhomM' acts as an S-adenosylmethionine-dependent alpha-N-methyltransferase that catalyzes two successive N-methylation reactions, converting N-desmethyl-phomopsin A to phomopsin A and phomopsin A further to an N,N-dimethylated congener called phomopsin E.

Its pathway is mycotoxin biosynthesis. Its function is as follows. Ribosomally synthesized cyclic peptide phomopsin precursor; part of the gene cluster that mediates the biosynthesis of the phomopsins, a group of hexapeptide mycotoxins which infects lupins and causes lupinosis disease in livestock. The phomA' translated product contains a 5-fold repeated peptide embedding the hexapeptide Tyr-Val-Ile-Pro-Ile-Asp and a 3-fold repeated peptide embedding the hexapeptide Tyr-Val-Ile-Pro-Phe-Asp, that is converted into phomapsin A and phomapsin P, respectively. After being excised from the precursor peptide by kexin proteases, the core peptides are cyclized and modified post-translationally by enzymes encoded within the corresponding gene cluster. The sequence is that of Ribosomally synthesized cyclic peptide phomopsin precursor phomA' from Diaporthe leptostromiformis (Lupinosis disease fungus).